The primary structure comprises 535 residues: WD repeat-containing protein 25 (535 aa).

Disordered stretches follow at residues 1–108 (MASL…PRPS) and 141–160 (DQST…RKRG). The span at 141-155 (DQSTFESTAGNASSS) shows a compositional bias: polar residues. WD repeat units lie at residues 235–277 (GHRG…HCLQ), 281–320 (VHSE…QVFS), 321–362 (GQSD…VVKG), 365–411 (ATIQ…KISN), 415–454 (HERY…RMSR), 460–501 (GHKV…RACT), and 504–535 (GHTQ…KIWH).

The sequence is that of WD repeat-containing protein 25 (Wdr25) from Mus musculus (Mouse).